A 204-amino-acid chain; its full sequence is 8-oxoguanine DNA glycosylase/AP lyase (204 aa).

Residues Lys128 and Asp146 contribute to the active site.

Belongs to the type-2 OGG1 family.

It carries out the reaction 2'-deoxyribonucleotide-(2'-deoxyribose 5'-phosphate)-2'-deoxyribonucleotide-DNA = a 3'-end 2'-deoxyribonucleotide-(2,3-dehydro-2,3-deoxyribose 5'-phosphate)-DNA + a 5'-end 5'-phospho-2'-deoxyribonucleoside-DNA + H(+). Functionally, catalyzes the excision of an oxidatively damaged form of guanine (7,8-dihydro-8-oxoguanine = 8-oxoG) from DNA. Also cleaves the DNA backbone at apurinic/apyrimidinic sites (AP sites). This Sulfurisphaera tokodaii (strain DSM 16993 / JCM 10545 / NBRC 100140 / 7) (Sulfolobus tokodaii) protein is 8-oxoguanine DNA glycosylase/AP lyase.